The following is a 4015-amino-acid chain: Hybrid PKS-NRPS synthetase iccA (4015 aa).

A compositionally biased stretch (polar residues) spans 1 to 12; the sequence is MAANDSNNQTKP. A disordered region spans residues 1-20; it reads MAANDSNNQTKPQLPEEPVA. A Ketosynthase family 3 (KS3) domain is found at 16-445; the sequence is EEPVAIVGSS…GTNAHVIIES (430 aa). Catalysis depends on for beta-ketoacyl synthase activity residues Cys-190, His-327, and His-365. Positions 560–885 are malonyl-CoA:ACP transacylase (MAT) domain; sequence VFTGQGAQWP…LKRGASDVEA (326 aa). The N-terminal hotdog fold stretch occupies residues 954 to 1091; that stretch reads HELLGRRTPD…GRLSVHLGEA (138 aa). The dehydratase (DH) domain stretch occupies residues 954–1260; that stretch reads HELLGRRTPD…TTKMVGEQDA (307 aa). In terms of domain architecture, PKS/mFAS DH spans 954 to 1261; that stretch reads HELLGRRTPD…TKMVGEQDAS (308 aa). His-986 (proton acceptor; for dehydratase activity) is an active-site residue. Residues 1106 to 1261 form a C-terminal hotdog fold region; that stretch reads LVNINTDRAY…TKMVGEQDAS (156 aa). The Proton donor; for dehydratase activity role is filled by Asp-1165. The tract at residues 1400 to 1598 is methyltransferase (MT) domain; the sequence is KDDMLNRFYM…YSGADMVVHD (199 aa). The segment at 2120–2261 is ketoreductase (KR) domain; that stretch reads KTYLMVGAAG…STATTIGNIG (142 aa). The disordered stretch occupies residues 2379-2405; the sequence is STLQNDSSQTGGTGNGSSVRRQVEEAQ. Positions 2409-2488 constitute a Carrier 1 domain; that stretch reads EAVDAVLDGF…QICTTAAKKV (80 aa). At Ser-2448 the chain carries O-(pantetheine 4'-phosphoryl)serine. Over residues 2498-2515 the composition is skewed to basic and acidic residues; that stretch reads EDAVAEEGGREAASKKEP. Disordered stretches follow at residues 2498–2529 and 2545–2597; these read EDAV…PVAP and TISE…VRDE. Positions 2553 to 2569 are enriched in low complexity; it reads SAFSNKGSSSSATGASS. Positions 2582-2597 are enriched in basic and acidic residues; that stretch reads TSKDQSHVRPETVRDE. Positions 2598-3029 are condensation (C) domain; it reads RMSPAQARIW…HVKLKDCVIH (432 aa). The tract at residues 3063–3459 is adenylation (A) (KR) domain; that stretch reads LKSPKNAAIQ…GTLLCLGRLD (397 aa). A reductase (RED) domain region spans residues 3063-3459; that stretch reads LKSPKNAAIQ…GTLLCLGRLD (397 aa). The Carrier 2 domain maps to 3572–3651; sequence EKMNIREGEL…EMALCVDEQR (80 aa). Ser-3611 is subject to O-(pantetheine 4'-phosphoryl)serine.

It in the C-terminal section; belongs to the NRP synthetase family.

The enzyme catalyses L-tyrosine + holo-[ACP] + 7 malonyl-CoA + acetyl-CoA + 8 AH2 + 2 S-adenosyl-L-methionine + ATP + 4 H(+) = N-[(4E,6E,10S,12Z,14E)-6,10-dimethyl-3-oxohexadeca-4,6,12,14-tetraenoyl]-L-tyrosyl-[ACP] + 8 A + AMP + 2 S-adenosyl-L-homocysteine + 7 CO2 + diphosphate + 8 CoA + 6 H2O. It functions in the pathway mycotoxin biosynthesis. In terms of biological role, hybrid PKS-NRPS synthetase; part of the gene cluster that mediates the biosynthesis of ilicicolin H, a 4-hydroxy-2-pyridonealkaloid that has potent and broad antifungal activities by inhibiting the mitochondrial respiration chain. IccA assembles the backbone of ilicicolin H. The PKS portion and trans-acting enoyl reductase iccB work together to construct an octaketide, and two methyl groups are introduced by the MT domain during the chain assembly. The nascent chain is then condensed with tyrosine, catalyzed by the C domain, and the resulting PKS-NRPS hybrid is offloaded by the RED domain to form an advanced tetramic acid intermediate. The biosynthesis of ilicicolin H starts with formation of the tetramic acid by the hybrid PKS-NRPS synthetase iccA with the partnering trans-enoyl reductase iccB since iccA lacks a designated enoylreductase (ER) domain. The cytochrome P450 monooxygenase iccC then catalyzes the ring expansion of the tetramate to the acyclic 2-pyridone. The pericyclase iccD further converts the acyclic 2-pyridone into 8-epi-ilicicolin H. Finally, the epimerase iccE converts 8-epi-ilicicolin H into ilicicolin H via epimerization. IccA to iccE are sufficient for ilicicolin H biosynthesis and the roles of the remaining enzymes, iccF, iccG and iccH within the pathway have still to be determined. In Talaromyces variabilis (Penicillium variabile), this protein is Hybrid PKS-NRPS synthetase iccA.